The chain runs to 532 residues: Cyclin-L1 (532 aa).

Cyclin-like stretches follow at residues 94–196 and 209–293; these read ELIQ…RVLK and KIIV…ETLR. T331 carries the phosphothreonine modification. The segment at 332 to 532 is disordered; sequence PALSTLGGFS…SRSGHGRHRR (201 aa). Phosphoserine is present on residues S341 and S344. Residues K345 and K353 each participate in a glycyl lysine isopeptide (Lys-Gly) (interchain with G-Cter in SUMO2) cross-link. Residues 348-358 are compositionally biased toward basic and acidic residues; sequence SPREVKAEEKS. Phosphoserine occurs at positions 358 and 361. Basic and acidic residues predominate over residues 367 to 376; it reads VKKEPEDRQQ. K368 participates in a covalent cross-link: Glycyl lysine isopeptide (Lys-Gly) (interchain with G-Cter in SUMO2). At S380 the chain carries Phosphoserine. Basic residues-rich tracts occupy residues 388–424, 444–458, 466–482, and 492–504; these read DSKRSRTSRSASRSRSRTRSRSRSHSPRRHYNNRRSR, RRHHNHGSPHLKAKH, SNRHGHKRKKSRSRSQS, and KKHRHERGHHRDR. Residues 396–438 form an RS region; it reads RSASRSRSRTRSRSRSHSPRRHYNNRRSRSGTYSSRSRSRSRS. S451 bears the Phosphoserine mark. Over residues 505 to 514 the composition is skewed to basic and acidic residues; it reads RERSRSFERS. Positions 515 to 532 are enriched in basic residues; sequence HKGKHHGGSRSGHGRHRR.

The protein belongs to the cyclin family. Cyclin L subfamily. Interacts with POLR2A via its hyperphosphorylated C-terminal domain (CTD). Interacts with CDK11A, CDK11B, CDK12 and CDK13. May form a ternary complex with CDK11B and casein kinase II (CKII). Interacts with pre-mRNA-splicing factors, including at least SRSF1, SRSF2 and SRSF7/SLU7. As to expression, widely expressed (at protein level).

Its subcellular location is the nucleus speckle. The protein localises to the nucleus. The protein resides in the nucleoplasm. It localises to the cytoplasm. In terms of biological role, involved in pre-mRNA splicing. Functions in association with cyclin-dependent kinases (CDKs). May play a role in the regulation of RNA polymerase II (pol II). Inhibited by the CDK-specific inhibitor CDKN1A/p21. In Mus musculus (Mouse), this protein is Cyclin-L1 (Ccnl1).